The sequence spans 170 residues: Protein SprT (170 aa).

In terms of domain architecture, SprT-like spans 23–165 (QLANQHLGTD…RECGEKLQFV (143 aa)). H78 is a Zn(2+) binding site. E79 is an active-site residue. H82 is a Zn(2+) binding site.

Belongs to the SprT family. Zn(2+) is required as a cofactor.

The protein localises to the cytoplasm. The polypeptide is Protein SprT (Yersinia enterocolitica serotype O:8 / biotype 1B (strain NCTC 13174 / 8081)).